The sequence spans 96 residues: uncharacterized protein (96 aa).

An N-terminal signal peptide occupies residues 1-19 (MKQIIPALITLSFSPMAIA).

This is an uncharacterized protein from Synechocystis sp. (strain ATCC 27184 / PCC 6803 / Kazusa).